A 288-amino-acid chain; its full sequence is Energy-coupling factor transporter ATP-binding protein EcfA2 (288 aa).

The ABC transporter domain maps to 3-243 (IVFEAVSHIY…RAELEAIGLG (241 aa)). ATP is bound at residue 40–47 (GPTGSGKS).

It belongs to the ABC transporter superfamily. Energy-coupling factor EcfA family. In terms of assembly, forms a stable energy-coupling factor (ECF) transporter complex composed of 2 membrane-embedded substrate-binding proteins (S component), 2 ATP-binding proteins (A component) and 2 transmembrane proteins (T component).

It is found in the cell membrane. Functionally, ATP-binding (A) component of a common energy-coupling factor (ECF) ABC-transporter complex. Unlike classic ABC transporters this ECF transporter provides the energy necessary to transport a number of different substrates. In Symbiobacterium thermophilum (strain DSM 24528 / JCM 14929 / IAM 14863 / T), this protein is Energy-coupling factor transporter ATP-binding protein EcfA2.